Here is a 222-residue protein sequence, read N- to C-terminus: 3-demethoxyubiquinol 3-hydroxylase (222 aa).

6 residues coordinate Fe cation: E71, E101, H104, E153, E185, and H188.

Belongs to the COQ7 family. Requires Fe cation as cofactor.

The protein localises to the cell membrane. It catalyses the reaction a 5-methoxy-2-methyl-3-(all-trans-polyprenyl)benzene-1,4-diol + AH2 + O2 = a 3-demethylubiquinol + A + H2O. It participates in cofactor biosynthesis; ubiquinone biosynthesis. Functionally, catalyzes the hydroxylation of 2-nonaprenyl-3-methyl-6-methoxy-1,4-benzoquinol during ubiquinone biosynthesis. The protein is 3-demethoxyubiquinol 3-hydroxylase of Bordetella pertussis (strain Tohama I / ATCC BAA-589 / NCTC 13251).